The sequence spans 357 residues: uncharacterized protein (357 aa).

Positions 1–19 (MKRILSFIFIILFFNSSYA) are cleaved as a signal peptide.

This is an uncharacterized protein from Rickettsia prowazekii (strain Madrid E).